A 164-amino-acid polypeptide reads, in one-letter code: MSDHLSIALKRLDPDLPVPQRAHPGDAGVDLCSTSDVTIEPGHRTLVGTGIAIALPVGTVGLIHPRSGLAAKSGLSIVNAPGTVDAGYRGELKVCLINLDPATAIDIRRGDRIAQLVVQRVELPVFEEVESLDDTTRGTGGYGSSGGHAILDTDAPGAVVGEGV.

Residues 66–68 (RSG), asparagine 79, 83–85 (TVD), and lysine 93 each bind substrate.

It belongs to the dUTPase family. Mg(2+) is required as a cofactor.

The catalysed reaction is dUTP + H2O = dUMP + diphosphate + H(+). The protein operates within pyrimidine metabolism; dUMP biosynthesis; dUMP from dCTP (dUTP route): step 2/2. In terms of biological role, this enzyme is involved in nucleotide metabolism: it produces dUMP, the immediate precursor of thymidine nucleotides and it decreases the intracellular concentration of dUTP so that uracil cannot be incorporated into DNA. The chain is Deoxyuridine 5'-triphosphate nucleotidohydrolase from Rhodococcus erythropolis (strain PR4 / NBRC 100887).